Consider the following 299-residue polypeptide: GTPase Era (299 aa).

In terms of domain architecture, Era-type G spans 2–170 (KTGFVALAGK…LDLIIENLPE (169 aa)). Residues 10–17 (GKPNVGKS) form a G1 region. 10-17 (GKPNVGKS) contributes to the GTP binding site. The segment at 36–40 (QTTRN) is G2. Positions 57–60 (DTPG) are G3. GTP-binding positions include 57 to 61 (DTPGI) and 119 to 122 (NKID). The segment at 119–122 (NKID) is G4. The interval 149 to 151 (TSA) is G5. The KH type-2 domain maps to 201–278 (TYEEIPHSVA…FLDLHVKVKR (78 aa)).

Belongs to the TRAFAC class TrmE-Era-EngA-EngB-Septin-like GTPase superfamily. Era GTPase family. In terms of assembly, monomer.

The protein localises to the cytoplasm. The protein resides in the cell inner membrane. An essential GTPase that binds both GDP and GTP, with rapid nucleotide exchange. Plays a role in 16S rRNA processing and 30S ribosomal subunit biogenesis and possibly also in cell cycle regulation and energy metabolism. The sequence is that of GTPase Era from Thermosipho melanesiensis (strain DSM 12029 / CIP 104789 / BI429).